The chain runs to 309 residues: G-protein coupled receptor 35 (309 aa).

Residues 1–24 (MNGTYNTCGSSDLTWPPAIKLGFY) lie on the Extracellular side of the membrane. A glycan (N-linked (GlcNAc...) asparagine) is linked at N2. Residues 25 to 45 (AYLGVLLVLGLLLNSLALWVF) form a helical membrane-spanning segment. Over 46–56 (CCRMQQWTETR) the chain is Cytoplasmic. A helical transmembrane segment spans residues 57–77 (IYMTNLAVADLCLLCTLPFVL). The Extracellular portion of the chain corresponds to 78-90 (HSLRDTSDTPLCQ). An intrachain disulfide couples C89 to C162. The helical transmembrane segment at 91 to 112 (LSQGIYLTNRYMSISLVTAIAV) threads the bilayer. Over 113–135 (DRYVAVRHPLRARGLRSPRQAAA) the chain is Cytoplasmic. Residues 136–156 (VCAVLWVLVIGSLVARWLLGI) traverse the membrane as a helical segment. The Extracellular segment spans residues 157–174 (QEGGFCFRSTRHNFNSMA). The chain crosses the membrane as a helical span at residues 175–195 (FPLLGFYLPLAVVVFCSLKVV). The Cytoplasmic portion of the chain corresponds to 196–218 (TALAQRPPTDVGQAEATRKAARM). Residues 219–239 (VWANLLVFVVCFLPLHVGLTV) form a helical membrane-spanning segment. At 240–258 (RLAVGWNACALLETIRRAL) the chain is on the extracellular side. The chain crosses the membrane as a helical span at residues 259-279 (YITSKLSDANCCLDAICYYYM). Over 280-309 (AKEFQEASALAVAPSAKAHKSQDSLCVTLA) the chain is Cytoplasmic. A phosphoserine mark is found at S287 and S294. A phosphoserine; by GRK5 and GRK6 mark is found at S300 and S303. At T307 the chain carries Phosphothreonine.

It belongs to the G-protein coupled receptor 1 family. In terms of assembly, interacts with GNA13. Interacts with ARRB2. Post-translationally, multiply phosphorylated in clusters of serines and threonines in the C-terminal tail. Phosphorylation of Ser-300 and Ser-303 is mediated by GRK5 and/or GRK6. Predominantly expressed in immune and gastrointestinal tissues.

Its subcellular location is the cell membrane. Functionally, G-protein coupled receptor that binds to several ligands including the tryptophan metabolite kynurenic acid (KYNA), lysophosphatidic acid (LPA) or 5-hydroxyindoleacetic acid (5-HIAA) with high affinity, leading to rapid and transient activation of numerous intracellular signaling pathways. Plays a role in neutrophil recruitment to sites of inflammation and bacterial clearance through the major serotonin metabolite 5-HIAA that acts as a physiological ligand. Stimulates lipid metabolism, thermogenic, and anti-inflammatory gene expression in adipose tissue once activated by kynurenic acid. In macrophages, activation by lysophosphatidic acid promotes GPR35-induced signaling with a distinct transcriptional profile characterized by TNF production associated with ERK and NF-kappa-B activation. In turn, induces chemotaxis of macrophages. This is G-protein coupled receptor 35 (GPR35) from Homo sapiens (Human).